The sequence spans 346 residues: MQTLNTLDLQTTSLKIVNGQLWILDQQALPQRQEWLLADTVASLIEHIQALRVRGAPLIGLSASLLLALLAERGLSQALLEQALIALRESRPTAVNLMNNLARMQQALLQPNWVTAMAAEALRLVDEDRELCERIAQHGAALVKPGSNLLTHCNTGGLATAGIGTAIGVLLRAHQQGNLRQVWVDETRPLLQGGRLTAWELGELGIPYQLICDSMAASLMAQGQVDAIWVGADRIAANGDVANKIGTYSLAVLAHYHRIPFYVAAPHTTHDPDCPDGAAIPIEQRAASEVTGVSGGFGHCQWAPEDAAVYNPAFDVTPAALISGWVLDSGVITPEQVAAGFFQPHR.

Residues 54–56 (RGA), Arg-91, and Gln-192 each bind substrate. Asp-233 acts as the Proton donor in catalysis. 243–244 (NK) contacts substrate.

The protein belongs to the eIF-2B alpha/beta/delta subunits family. MtnA subfamily.

The catalysed reaction is 5-(methylsulfanyl)-alpha-D-ribose 1-phosphate = 5-(methylsulfanyl)-D-ribulose 1-phosphate. The protein operates within amino-acid biosynthesis; L-methionine biosynthesis via salvage pathway; L-methionine from S-methyl-5-thio-alpha-D-ribose 1-phosphate: step 1/6. In terms of biological role, catalyzes the interconversion of methylthioribose-1-phosphate (MTR-1-P) into methylthioribulose-1-phosphate (MTRu-1-P). The polypeptide is Methylthioribose-1-phosphate isomerase (Yersinia pseudotuberculosis serotype O:1b (strain IP 31758)).